The following is a 284-amino-acid chain: Bifunctional protein FolD (284 aa).

NADP(+) contacts are provided by residues 164-166 (GRG), Ser-189, and Ile-230.

It belongs to the tetrahydrofolate dehydrogenase/cyclohydrolase family. As to quaternary structure, homodimer.

The catalysed reaction is (6R)-5,10-methylene-5,6,7,8-tetrahydrofolate + NADP(+) = (6R)-5,10-methenyltetrahydrofolate + NADPH. It catalyses the reaction (6R)-5,10-methenyltetrahydrofolate + H2O = (6R)-10-formyltetrahydrofolate + H(+). It functions in the pathway one-carbon metabolism; tetrahydrofolate interconversion. Functionally, catalyzes the oxidation of 5,10-methylenetetrahydrofolate to 5,10-methenyltetrahydrofolate and then the hydrolysis of 5,10-methenyltetrahydrofolate to 10-formyltetrahydrofolate. This is Bifunctional protein FolD from Desulforamulus reducens (strain ATCC BAA-1160 / DSM 100696 / MI-1) (Desulfotomaculum reducens).